A 357-amino-acid polypeptide reads, in one-letter code: MAEAAPAIEAILAEYGELEQRLADPDLHADAGAARKVGRRFAQISPIVATYRKLEAARGDLEAARELAADDASFAAEVDELTDQIGDLDRALTDLLAPRDPHDADDIVLEVKSGEGGEESALFAADLARMYIRYAERHGWTVTMLGETTSDLGGYKDATLSIASKGDSADGVWARLKFEGGVHRVQRVPVTESQGRVHTSAAGVLVYPEPDEVEQVQIDESDLRVDVYRSSGKGGQGVNTTDSAVRITHLPTGIVVTCQNERSQLQNKARAMQVLAARLQALAEEQASADASADRASQIRTVDRSERIRTYNFPENRIADHRINFKAHNLDQVLDGDLDPLLDALAAADRQARLQNT.

Q236 is modified (N5-methylglutamine).

It belongs to the prokaryotic/mitochondrial release factor family. In terms of processing, methylated by PrmC. Methylation increases the termination efficiency of RF1.

Its subcellular location is the cytoplasm. Functionally, peptide chain release factor 1 directs the termination of translation in response to the peptide chain termination codons UAG and UAA. This Mycolicibacterium gilvum (strain PYR-GCK) (Mycobacterium gilvum (strain PYR-GCK)) protein is Peptide chain release factor 1.